Consider the following 216-residue polypeptide: Ribosomal RNA small subunit methyltransferase G (216 aa).

S-adenosyl-L-methionine-binding positions include G73, L78, 124–125 (AE), and R139.

Belongs to the methyltransferase superfamily. RNA methyltransferase RsmG family.

Its subcellular location is the cytoplasm. Functionally, specifically methylates the N7 position of guanine in position 518 of 16S rRNA. This Arthrobacter sp. (strain FB24) protein is Ribosomal RNA small subunit methyltransferase G.